The sequence spans 230 residues: Ribose-5-phosphate isomerase A (230 aa).

Residues 32–35 (TGST), 85–88 (DGAD), and 98–101 (KGGG) contribute to the substrate site. Glutamate 107 (proton acceptor) is an active-site residue. Residue lysine 125 coordinates substrate.

The protein belongs to the ribose 5-phosphate isomerase family. In terms of assembly, homodimer.

It carries out the reaction aldehydo-D-ribose 5-phosphate = D-ribulose 5-phosphate. It functions in the pathway carbohydrate degradation; pentose phosphate pathway; D-ribose 5-phosphate from D-ribulose 5-phosphate (non-oxidative stage): step 1/1. Its function is as follows. Catalyzes the reversible conversion of ribose-5-phosphate to ribulose 5-phosphate. This chain is Ribose-5-phosphate isomerase A, found in Burkholderia ambifaria (strain MC40-6).